A 245-amino-acid chain; its full sequence is Ureidoacrylate amidohydrolase RutB (245 aa).

The Proton acceptor role is filled by aspartate 38. The active site involves lysine 147. The active-site Nucleophile is the cysteine 180.

The protein belongs to the isochorismatase family. RutB subfamily.

It catalyses the reaction (Z)-3-ureidoacrylate + H2O + H(+) = (Z)-3-aminoacrylate + NH4(+) + CO2. It carries out the reaction (Z)-3-ureidoacrylate + H2O = (Z)-3-aminoacrylate + carbamate + H(+). The enzyme catalyses (Z)-2-methylureidoacrylate + H2O + H(+) = (Z)-2-methylaminoacrylate + NH4(+) + CO2. Functionally, hydrolyzes ureidoacrylate to form aminoacrylate and carbamate. The carbamate hydrolyzes spontaneously, thereby releasing one of the nitrogen atoms of the pyrimidine ring as ammonia and one of its carbon atoms as CO2. The chain is Ureidoacrylate amidohydrolase RutB from Acinetobacter baylyi (strain ATCC 33305 / BD413 / ADP1).